A 372-amino-acid polypeptide reads, in one-letter code: tRNA-specific 2-thiouridylase MnmA (372 aa).

ATP-binding positions include 16 to 23 and methionine 42; that span reads GMSGGVDS. The segment at 102-104 is interaction with target base in tRNA; it reads NPD. The Nucleophile role is filled by cysteine 107. A disulfide bridge connects residues cysteine 107 and cysteine 205. Residue glycine 132 coordinates ATP. Residues 155–157 form an interaction with tRNA region; it reads KDQ. The Cysteine persulfide intermediate role is filled by cysteine 205. Residues 317–318 are interaction with tRNA; the sequence is RY.

It belongs to the MnmA/TRMU family.

Its subcellular location is the cytoplasm. It catalyses the reaction S-sulfanyl-L-cysteinyl-[protein] + uridine(34) in tRNA + AH2 + ATP = 2-thiouridine(34) in tRNA + L-cysteinyl-[protein] + A + AMP + diphosphate + H(+). Functionally, catalyzes the 2-thiolation of uridine at the wobble position (U34) of tRNA, leading to the formation of s(2)U34. This chain is tRNA-specific 2-thiouridylase MnmA, found in Shewanella frigidimarina (strain NCIMB 400).